The following is a 159-amino-acid chain: Ribosomal RNA large subunit methyltransferase H (159 aa).

S-adenosyl-L-methionine contacts are provided by residues Ile76, Gly108, and 127–132 (FSKMTF).

The protein belongs to the RNA methyltransferase RlmH family. In terms of assembly, homodimer.

Its subcellular location is the cytoplasm. The catalysed reaction is pseudouridine(1915) in 23S rRNA + S-adenosyl-L-methionine = N(3)-methylpseudouridine(1915) in 23S rRNA + S-adenosyl-L-homocysteine + H(+). Specifically methylates the pseudouridine at position 1915 (m3Psi1915) in 23S rRNA. This is Ribosomal RNA large subunit methyltransferase H from Clostridium botulinum (strain Loch Maree / Type A3).